The primary structure comprises 1017 residues: Disease resistance protein RML1B (1017 aa).

The region spanning 12–176 is the TIR domain; that stretch reads YKFNVFASFH…KIARDVLDKL (165 aa). The active site involves glutamate 87. One can recognise an NB-ARC domain in the interval 191–447; it reads EAHLREIKSL…HIAIFFNKED (257 aa). 10 LRR repeats span residues 539 to 562, 583 to 605, 606 to 628, 629 to 652, 654 to 675, 676 to 698, 699 to 724, 738 to 760, 761 to 782, and 784 to 809; these read ISRISEVSIRKKAFKRMPNLQFLK, PCLLRLLDWKAYPSKSLPPTFNP, EHLVELNMHSSQLEYLWQGTQPL, KNLKKMDLSQSKNLKQLPDLSNAT, LEYLYLMGCESLIEIPSSISHL, HKLEMLATVGCINLEVIPAHMNL, ESLQTVYLGGCSRLRNIPVMSTNIRY, CPGLKTLDVSGSRNFKGLLTHLP, TSLTTLNLCYTDIERIPDCFKS, and HQLKGVNLRGCRRLASLPELPRSLLT.

It carries out the reaction NAD(+) + H2O = ADP-D-ribose + nicotinamide + H(+). TIR-NB-LRR receptor-like protein that confers resistance to the pathogen Leptosphaeria maculans (blackleg disease). This chain is Disease resistance protein RML1B, found in Arabidopsis thaliana (Mouse-ear cress).